The primary structure comprises 132 residues: Agouti-signaling protein (132 aa).

A signal peptide spans 1–22 (MDVTRLLLATLLVFLCFFTAYS). The N-linked (GlcNAc...) asparagine glycan is linked to asparagine 39. Residues 57-88 (KKSKQTSRKEAEKKRSSKKEASMKKVARPRTP) form a disordered region. Residues 63-79 (SRKEAEKKRSSKKEASM) show a composition bias toward basic and acidic residues. Cystine bridges form between cysteine 93/cysteine 108, cysteine 100/cysteine 114, cysteine 107/cysteine 125, cysteine 111/cysteine 132, and cysteine 116/cysteine 123. One can recognise an Agouti domain in the interval 93–132 (CVATRDSCKPPAPACCDPCASCQCRFFRSACSCRVLSLNC).

The protein localises to the secreted. Functionally, involved in the regulation of melanogenesis. The binding of ASP to MC1R precludes alpha-MSH initiated signaling and thus blocks production of cAMP, leading to a down-regulation of eumelanogenesis (brown/black pigment) and thus increasing synthesis of pheomelanin (yellow/red pigment). The protein is Agouti-signaling protein (ASIP) of Macaca assamensis (Assam macaque).